Reading from the N-terminus, the 473-residue chain is LEC14B protein (473 aa).

WD repeat units follow at residues 212 to 242, 254 to 285, 301 to 331, 377 to 413, and 425 to 455; these read GYSF…CVYD, AHES…KVWD, GHLE…KLWD, GHSV…YIYD, and YHKA…VKWE.

This sequence belongs to the WD repeat LEC14B family.

This is LEC14B protein from Lithospermum erythrorhizon (Purple gromwell).